Here is a 556-residue protein sequence, read N- to C-terminus: Zinc finger protein 18 (556 aa).

Residues 41 to 123 (RQLFRQFRYQ…TLVESLKGDP (83 aa)) form the SCAN box domain. Residues 169–195 (QDLPLQNTSSAPGELLSHGVKEESDLE) form a disordered region. In terms of domain architecture, KRAB spans 218 to 291 (EVGTALLPSL…HLHSAEKMAR (74 aa)). 5 C2H2-type zinc fingers span residues 415-437 (PTCRECGKTFYRNSQLVFHQRTH), 443-465 (FHCRICKKAFLRSSDFVKHQRTH), 471-493 (CKCDYCGKGFSDFSGLRHHEKIH), 499-521 (YKCPICEKSFIQRSNFNRHQRVH), and 527-549 (YKCTHCGKRFSWSSSLDKHQRSH).

The protein belongs to the krueppel C2H2-type zinc-finger protein family.

It is found in the nucleus. May be involved in transcriptional regulation. The sequence is that of Zinc finger protein 18 (Znf18) from Rattus norvegicus (Rat).